We begin with the raw amino-acid sequence, 490 residues long: Chromosomal replication initiator protein DnaA (490 aa).

The interval 1 to 91 (MTMKGGVASQ…GELWAAHDAT (91 aa)) is domain I, interacts with DnaA modulators. Residues 91–147 (TGRRIDLKSRLEFEAAAGAYVEATPKAVAAEPIEIVLPVSTDAPTVVAPSAKSPRTQ) are domain II. A domain III, AAA+ region region spans residues 148–370 (GLQERFTFET…GALNTLSARA (223 aa)). Positions 192, 194, 195, and 196 each coordinate ATP. The tract at residues 371 to 490 (GEGLSRMTLD…LETLTRKLRG (120 aa)) is domain IV, binds dsDNA.

Belongs to the DnaA family. As to quaternary structure, oligomerizes as a right-handed, spiral filament on DNA at oriC.

The protein resides in the cytoplasm. Its function is as follows. Plays an essential role in the initiation and regulation of chromosomal replication. ATP-DnaA binds to the origin of replication (oriC) to initiate formation of the DNA replication initiation complex once per cell cycle. Binds the DnaA box (a 9 base pair repeat at the origin) and separates the double-stranded (ds)DNA. Forms a right-handed helical filament on oriC DNA; dsDNA binds to the exterior of the filament while single-stranded (ss)DNA is stabiized in the filament's interior. The ATP-DnaA-oriC complex binds and stabilizes one strand of the AT-rich DNA unwinding element (DUE), permitting loading of DNA polymerase. After initiation quickly degrades to an ADP-DnaA complex that is not apt for DNA replication. Binds acidic phospholipids. This chain is Chromosomal replication initiator protein DnaA, found in Caulobacter vibrioides (strain ATCC 19089 / CIP 103742 / CB 15) (Caulobacter crescentus).